The primary structure comprises 131 residues: Large-conductance mechanosensitive channel (131 aa).

3 helical membrane-spanning segments follow: residues 8 to 28 (FAIR…GAFG), 30 to 50 (IVSS…LGGI), and 67 to 87 (GAFI…FLFV).

This sequence belongs to the MscL family. As to quaternary structure, homopentamer.

It localises to the cell membrane. Its function is as follows. Channel that opens in response to stretch forces in the membrane lipid bilayer. May participate in the regulation of osmotic pressure changes within the cell. The polypeptide is Large-conductance mechanosensitive channel (Geobacillus kaustophilus (strain HTA426)).